We begin with the raw amino-acid sequence, 414 residues long: Putative competence-damage inducible protein (414 aa).

It belongs to the CinA family.

In Clostridium novyi (strain NT), this protein is Putative competence-damage inducible protein.